Here is a 215-residue protein sequence, read N- to C-terminus: Nascent polypeptide-associated complex subunit alpha (215 aa).

The segment at 1-82 (MPGEATETVP…EKKARKAMSK (82 aa)) is disordered. A compositionally biased stretch (polar residues) spans 9 to 28 (VPVTEQEMQQPQAETGSGTE). Residues 29-42 (SDSDESVPDLEEGD) show a composition bias toward acidic residues. Positions 44–57 (AQTQTQQAQLAAAA) are enriched in low complexity. Residues 70-135 (SRSEKKARKA…AKIEDLSQQA (66 aa)) enclose the NAC-A/B domain. Phosphoserine is present on Ser-166. Residues 176–213 (VEVKDIELVMSQANVSRAKAVRALKNNNNDIVNAIMEL) enclose the UBA domain.

It belongs to the NAC-alpha family.

Its function is as follows. May promote appropriate targeting of ribosome-nascent polypeptide complexes. This Danio rerio (Zebrafish) protein is Nascent polypeptide-associated complex subunit alpha (naca).